The chain runs to 107 residues: Ig kappa chain V-VI region NQ5-78.2.6 (107 aa).

The segment at 1–23 is framework-1; it reads QILLTQSPAIMSASPGQKVTMTC. C23 and C87 are oxidised to a cystine. The interval 24-33 is complementarity-determining-1; the sequence is SASSSVSYMH. The framework-2 stretch occupies residues 34–48; sequence WYQQKSGTSPKRWIY. The interval 49–55 is complementarity-determining-2; that stretch reads DTSKLAS. The interval 56–87 is framework-3; it reads GVPARFXGSGSATSYSLTITSMQAEDAATYYC. The interval 88 to 96 is complementarity-determining-3; that stretch reads QQWSSNPLT. The interval 97–106 is framework-4; it reads FGSGTKLEXK.

In terms of biological role, anti-2-phenyl oxazolone (PHOX) Antibody. The polypeptide is Ig kappa chain V-VI region NQ5-78.2.6 (Mus musculus (Mouse)).